A 141-amino-acid chain; its full sequence is HTH-type transcriptional repressor NsrR (141 aa).

One can recognise an HTH rrf2-type domain in the interval 2-129 (QLTSFTDYGL…DNYTLADLVE (128 aa)). The segment at residues 28-51 (ISEVTEVYGVSRNHMVKIINQLSR) is a DNA-binding region (H-T-H motif). Residues C91, C96, and C102 each contribute to the [2Fe-2S] cluster site.

The cofactor is [2Fe-2S] cluster.

In terms of biological role, nitric oxide-sensitive repressor of genes involved in protecting the cell against nitrosative stress. May require iron for activity. This chain is HTH-type transcriptional repressor NsrR, found in Salmonella choleraesuis (strain SC-B67).